The chain runs to 264 residues: 3-methyl-2-oxobutanoate hydroxymethyltransferase (264 aa).

Residues D45 and D84 each contribute to the Mg(2+) site. 3-methyl-2-oxobutanoate contacts are provided by residues 45 to 46 (DS), D84, and K112. Residue E114 participates in Mg(2+) binding. Residue E181 is the Proton acceptor of the active site.

The protein belongs to the PanB family. As to quaternary structure, homodecamer; pentamer of dimers. It depends on Mg(2+) as a cofactor.

It localises to the cytoplasm. It catalyses the reaction 3-methyl-2-oxobutanoate + (6R)-5,10-methylene-5,6,7,8-tetrahydrofolate + H2O = 2-dehydropantoate + (6S)-5,6,7,8-tetrahydrofolate. It participates in cofactor biosynthesis; (R)-pantothenate biosynthesis; (R)-pantoate from 3-methyl-2-oxobutanoate: step 1/2. Functionally, catalyzes the reversible reaction in which hydroxymethyl group from 5,10-methylenetetrahydrofolate is transferred onto alpha-ketoisovalerate to form ketopantoate. This Photobacterium profundum (strain SS9) protein is 3-methyl-2-oxobutanoate hydroxymethyltransferase.